Here is a 604-residue protein sequence, read N- to C-terminus: Elongation factor 4 (604 aa).

One can recognise a tr-type G domain in the interval 7–189; the sequence is SRIRNFSIIA…SIVHLVPPPD (183 aa). GTP is bound by residues 19–24 and 136–139; these read DHGKST and NKID.

It belongs to the TRAFAC class translation factor GTPase superfamily. Classic translation factor GTPase family. LepA subfamily.

Its subcellular location is the cell inner membrane. The catalysed reaction is GTP + H2O = GDP + phosphate + H(+). Functionally, required for accurate and efficient protein synthesis under certain stress conditions. May act as a fidelity factor of the translation reaction, by catalyzing a one-codon backward translocation of tRNAs on improperly translocated ribosomes. Back-translocation proceeds from a post-translocation (POST) complex to a pre-translocation (PRE) complex, thus giving elongation factor G a second chance to translocate the tRNAs correctly. Binds to ribosomes in a GTP-dependent manner. In Gloeothece citriformis (strain PCC 7424) (Cyanothece sp. (strain PCC 7424)), this protein is Elongation factor 4.